The sequence spans 213 residues: MQAQIVNKIFEIFSKNNPSPKTELIYKNDFTLLVAVMLSAQATDISVNLATKSLFETYDTTEKILELGEDGLKKYIKSIGLFNSKAKNIIALCKILISNYQSSVPNDFKELIKLPGVGRKTANVVLNCLFGMPTMAVDTHVFRVAKRIGLARGNSPEIVEKELLQIINEKWLTHAHHWLILHGRYICKARKPDCDICPIKEYCEYYNSPIISK.

In terms of domain architecture, HhH spans Phe-108–Asn-127. [4Fe-4S] cluster is bound by residues Cys-187, Cys-194, Cys-197, and Cys-203.

This sequence belongs to the Nth/MutY family. Requires [4Fe-4S] cluster as cofactor.

The catalysed reaction is 2'-deoxyribonucleotide-(2'-deoxyribose 5'-phosphate)-2'-deoxyribonucleotide-DNA = a 3'-end 2'-deoxyribonucleotide-(2,3-dehydro-2,3-deoxyribose 5'-phosphate)-DNA + a 5'-end 5'-phospho-2'-deoxyribonucleoside-DNA + H(+). In terms of biological role, DNA repair enzyme that has both DNA N-glycosylase activity and AP-lyase activity. The DNA N-glycosylase activity releases various damaged pyrimidines from DNA by cleaving the N-glycosidic bond, leaving an AP (apurinic/apyrimidinic) site. The AP-lyase activity cleaves the phosphodiester bond 3' to the AP site by a beta-elimination, leaving a 3'-terminal unsaturated sugar and a product with a terminal 5'-phosphate. In Rickettsia felis (strain ATCC VR-1525 / URRWXCal2) (Rickettsia azadi), this protein is Endonuclease III.